We begin with the raw amino-acid sequence, 367 residues long: Alanine racemase (367 aa).

The active-site Proton acceptor; specific for D-alanine is K34. An N6-(pyridoxal phosphate)lysine modification is found at K34. Substrate is bound at residue R129. Y251 serves as the catalytic Proton acceptor; specific for L-alanine. Residue M299 coordinates substrate.

Belongs to the alanine racemase family. The cofactor is pyridoxal 5'-phosphate.

It catalyses the reaction L-alanine = D-alanine. Its pathway is amino-acid biosynthesis; D-alanine biosynthesis; D-alanine from L-alanine: step 1/1. In terms of biological role, catalyzes the interconversion of L-alanine and D-alanine. May also act on other amino acids. This Thiobacillus denitrificans (strain ATCC 25259 / T1) protein is Alanine racemase (alr).